Reading from the N-terminus, the 479-residue chain is Ribulose bisphosphate carboxylase large chain (479 aa).

The propeptide occupies 1–2 (MS). 2 residues coordinate substrate: Asn123 and Thr173. Lys175 acts as the Proton acceptor in catalysis. Substrate is bound at residue Lys177. Residues Lys201, Asp203, and Glu204 each coordinate Mg(2+). Position 201 is an N6-carboxylysine (Lys201). Phosphoserine is present on Ser208. Catalysis depends on His294, which acts as the Proton acceptor. Residues Arg295 and His327 each coordinate substrate. Position 330 is a phosphothreonine (Thr330). Ser379 is a binding site for substrate.

Belongs to the RuBisCO large chain family. Type I subfamily. As to quaternary structure, heterohexadecamer of 8 large chains and 8 small chains; disulfide-linked. The disulfide link is formed within the large subunit homodimers. Mg(2+) serves as cofactor. In terms of processing, the disulfide bond which can form in the large chain dimeric partners within the hexadecamer appears to be associated with oxidative stress and protein turnover.

It is found in the plastid. It localises to the chloroplast. It carries out the reaction 2 (2R)-3-phosphoglycerate + 2 H(+) = D-ribulose 1,5-bisphosphate + CO2 + H2O. It catalyses the reaction D-ribulose 1,5-bisphosphate + O2 = 2-phosphoglycolate + (2R)-3-phosphoglycerate + 2 H(+). Its function is as follows. RuBisCO catalyzes two reactions: the carboxylation of D-ribulose 1,5-bisphosphate, the primary event in carbon dioxide fixation, as well as the oxidative fragmentation of the pentose substrate in the photorespiration process. Both reactions occur simultaneously and in competition at the same active site. The protein is Ribulose bisphosphate carboxylase large chain of Capsella bursa-pastoris (Shepherd's purse).